Here is an 89-residue protein sequence, read N- to C-terminus: Small ribosomal subunit protein uS15 (89 aa).

The span at 1-20 shows a compositional bias: basic and acidic residues; sequence MSITAERKAELIKTHARGEA. The tract at residues 1–24 is disordered; the sequence is MSITAERKAELIKTHARGEADTGS.

It belongs to the universal ribosomal protein uS15 family. As to quaternary structure, part of the 30S ribosomal subunit. Forms a bridge to the 50S subunit in the 70S ribosome, contacting the 23S rRNA.

One of the primary rRNA binding proteins, it binds directly to 16S rRNA where it helps nucleate assembly of the platform of the 30S subunit by binding and bridging several RNA helices of the 16S rRNA. In terms of biological role, forms an intersubunit bridge (bridge B4) with the 23S rRNA of the 50S subunit in the ribosome. This chain is Small ribosomal subunit protein uS15, found in Phenylobacterium zucineum (strain HLK1).